The chain runs to 186 residues: Potassium-transporting ATPase KdpC subunit (186 aa).

The helical transmembrane segment at 10 to 30 (LTIITMVLCGFLFPLAITLIG) threads the bilayer.

Belongs to the KdpC family. In terms of assembly, the system is composed of three essential subunits: KdpA, KdpB and KdpC.

Its subcellular location is the cell membrane. In terms of biological role, part of the high-affinity ATP-driven potassium transport (or Kdp) system, which catalyzes the hydrolysis of ATP coupled with the electrogenic transport of potassium into the cytoplasm. This subunit acts as a catalytic chaperone that increases the ATP-binding affinity of the ATP-hydrolyzing subunit KdpB by the formation of a transient KdpB/KdpC/ATP ternary complex. This is Potassium-transporting ATPase KdpC subunit from Staphylococcus aureus (strain bovine RF122 / ET3-1).